The chain runs to 410 residues: Peptidase T (410 aa).

Histidine 79 contributes to the Zn(2+) binding site. Aspartate 81 is a catalytic residue. Aspartate 142 contributes to the Zn(2+) binding site. The Proton acceptor role is filled by glutamate 176. Positions 177, 199, and 381 each coordinate Zn(2+).

The protein belongs to the peptidase M20B family. Zn(2+) is required as a cofactor.

It is found in the cytoplasm. The enzyme catalyses Release of the N-terminal residue from a tripeptide.. Cleaves the N-terminal amino acid of tripeptides. In Bacillus subtilis (strain 168), this protein is Peptidase T (pepT).